The following is a 178-amino-acid chain: MSEPSSCFVLPDPEWIYRVGIGQDSHRFLPSDNPKPCVLGGIIFENTPGFEANSDGDVVFHAICNAFSSVTHQVILGALADELLKAKGISDSAVYLKEAVASLKPTQKISHLAITIEGQRPKLLPKISAMREKIAEILRISLDSVNITATSGEGLTSMGQGHGVQCFCVLTVMEFCPR.

Asp24, His26, and His61 together coordinate a divalent metal cation. 4-CDP-2-C-methyl-D-erythritol 2-phosphate is bound at residue 24 to 26 (DSH). 150-153 (TSGE) serves as a coordination point for 4-CDP-2-C-methyl-D-erythritol 2-phosphate.

It belongs to the IspF family. In terms of assembly, homotrimer. It depends on a divalent metal cation as a cofactor.

It catalyses the reaction 4-CDP-2-C-methyl-D-erythritol 2-phosphate = 2-C-methyl-D-erythritol 2,4-cyclic diphosphate + CMP. Its pathway is isoprenoid biosynthesis; isopentenyl diphosphate biosynthesis via DXP pathway; isopentenyl diphosphate from 1-deoxy-D-xylulose 5-phosphate: step 4/6. In terms of biological role, involved in the biosynthesis of isopentenyl diphosphate (IPP) and dimethylallyl diphosphate (DMAPP), two major building blocks of isoprenoid compounds. Catalyzes the conversion of 4-diphosphocytidyl-2-C-methyl-D-erythritol 2-phosphate (CDP-ME2P) to 2-C-methyl-D-erythritol 2,4-cyclodiphosphate (ME-CPP) with a corresponding release of cytidine 5-monophosphate (CMP). The chain is 2-C-methyl-D-erythritol 2,4-cyclodiphosphate synthase from Chlamydia muridarum (strain MoPn / Nigg).